A 465-amino-acid chain; its full sequence is Kynureninase (465 aa).

Pyridoxal 5'-phosphate contacts are provided by residues leucine 133, threonine 134, 161-164 (FPSD), serine 217, aspartate 246, histidine 249, and tyrosine 271. The residue at position 272 (lysine 272) is an N6-(pyridoxal phosphate)lysine. Pyridoxal 5'-phosphate-binding residues include tryptophan 302 and asparagine 330.

The protein belongs to the kynureninase family. In terms of assembly, homodimer. The cofactor is pyridoxal 5'-phosphate.

It is found in the cytoplasm. The catalysed reaction is L-kynurenine + H2O = anthranilate + L-alanine + H(+). The enzyme catalyses 3-hydroxy-L-kynurenine + H2O = 3-hydroxyanthranilate + L-alanine + H(+). Its pathway is amino-acid degradation; L-kynurenine degradation; L-alanine and anthranilate from L-kynurenine: step 1/1. It functions in the pathway cofactor biosynthesis; NAD(+) biosynthesis; quinolinate from L-kynurenine: step 2/3. In terms of biological role, catalyzes the cleavage of L-kynurenine (L-Kyn) and L-3-hydroxykynurenine (L-3OHKyn) into anthranilic acid (AA) and 3-hydroxyanthranilic acid (3-OHAA), respectively. The polypeptide is Kynureninase (Nematostella vectensis (Starlet sea anemone)).